The sequence spans 371 residues: Aspartate-semialdehyde dehydrogenase (371 aa).

Residues 9–12 (RGMV), 37–38 (TS), and glutamine 73 each bind NADP(+). Arginine 102 provides a ligand contact to phosphate. The Acyl-thioester intermediate role is filled by cysteine 135. Glutamine 162 is a binding site for substrate. NADP(+) contacts are provided by residues 165 to 166 (SG) and proline 193. Glutamate 241 provides a ligand contact to substrate. Lysine 244 is a phosphate binding site. Arginine 268 is a binding site for substrate. The Proton acceptor role is filled by histidine 275. Glutamine 351 contacts NADP(+).

The protein belongs to the aspartate-semialdehyde dehydrogenase family. In terms of assembly, homodimer.

It carries out the reaction L-aspartate 4-semialdehyde + phosphate + NADP(+) = 4-phospho-L-aspartate + NADPH + H(+). The protein operates within amino-acid biosynthesis; L-lysine biosynthesis via DAP pathway; (S)-tetrahydrodipicolinate from L-aspartate: step 2/4. Its pathway is amino-acid biosynthesis; L-methionine biosynthesis via de novo pathway; L-homoserine from L-aspartate: step 2/3. It participates in amino-acid biosynthesis; L-threonine biosynthesis; L-threonine from L-aspartate: step 2/5. Functionally, catalyzes the NADPH-dependent formation of L-aspartate-semialdehyde (L-ASA) by the reductive dephosphorylation of L-aspartyl-4-phosphate. This chain is Aspartate-semialdehyde dehydrogenase, found in Neisseria meningitidis serogroup A / serotype 4A (strain DSM 15465 / Z2491).